Here is a 242-residue protein sequence, read N- to C-terminus: MNKRFNSEDKIILAIDGLDLSQAKLLLEKCPHVKWVKVGLELFVREGPRVIEILKGLNKKIFLDLKFHDIPNTMSAACFQVSKLGVDIISIHASAGLKALKDSKKASLEGATSVSVKPPFVVGITVLTSFSLKDFQTDLDRNNSIEENVLRLAKLSFDAGLDGCVCSPWEVKMLRSNYKNNFELITPGIRLNIDSKDDQNRIMTPHEAIDNGASKLVIGRSISKAIDPNMALIEIFKSIDSD.

Residues aspartate 16, lysine 37, 64 to 73 (DLKFHDIPNT), threonine 128, arginine 190, glutamine 199, glycine 219, and arginine 220 contribute to the substrate site. Lysine 66 acts as the Proton donor in catalysis.

This sequence belongs to the OMP decarboxylase family. Type 1 subfamily. In terms of assembly, homodimer.

It catalyses the reaction orotidine 5'-phosphate + H(+) = UMP + CO2. Its pathway is pyrimidine metabolism; UMP biosynthesis via de novo pathway; UMP from orotate: step 2/2. Catalyzes the decarboxylation of orotidine 5'-monophosphate (OMP) to uridine 5'-monophosphate (UMP). The protein is Orotidine 5'-phosphate decarboxylase of Prochlorococcus marinus (strain AS9601).